The sequence spans 221 residues: MYLENCIVILTSTTPPWWAIPPAWSLGAEIQAYFLLPILLTYKMLGLSVFWISYIIYSLANLNIIHSDYFGYRLIPGVIFMFLSGAYLQKIVSGKASRLEMLSLIIIYIISLFWLVFFIIIKGKYGAYTRETLLGLLVGIPLVYTLLKIRRKFYFNDLFGKLSYGIFLSHFLSFWILEFVNLTQNIISMIFLSLIISASVSYLIITLIENKVEKIRYNLTR.

The next 6 membrane-spanning stretches (helical) occupy residues 33–55 (YFLL…ISYI), 70–92 (FGYR…QKIV), 99–121 (LEML…FIII), 125–147 (YGAY…YTLL), 154–176 (YFND…SFWI), and 186–208 (IISM…ITLI).

The protein resides in the cell membrane. This is an uncharacterized protein from Aquifex aeolicus (strain VF5).